The primary structure comprises 216 residues: Imidazole glycerol phosphate synthase subunit HisH (216 aa).

In terms of domain architecture, Glutamine amidotransferase type-1 spans 2–216 (SIAIIDYGSG…LISNFLRWKP (215 aa)). The Nucleophile role is filled by C88. Residues H196 and E198 contribute to the active site.

As to quaternary structure, heterodimer of HisH and HisF.

It is found in the cytoplasm. The catalysed reaction is 5-[(5-phospho-1-deoxy-D-ribulos-1-ylimino)methylamino]-1-(5-phospho-beta-D-ribosyl)imidazole-4-carboxamide + L-glutamine = D-erythro-1-(imidazol-4-yl)glycerol 3-phosphate + 5-amino-1-(5-phospho-beta-D-ribosyl)imidazole-4-carboxamide + L-glutamate + H(+). It catalyses the reaction L-glutamine + H2O = L-glutamate + NH4(+). It participates in amino-acid biosynthesis; L-histidine biosynthesis; L-histidine from 5-phospho-alpha-D-ribose 1-diphosphate: step 5/9. Functionally, IGPS catalyzes the conversion of PRFAR and glutamine to IGP, AICAR and glutamate. The HisH subunit catalyzes the hydrolysis of glutamine to glutamate and ammonia as part of the synthesis of IGP and AICAR. The resulting ammonia molecule is channeled to the active site of HisF. This chain is Imidazole glycerol phosphate synthase subunit HisH, found in Bradyrhizobium diazoefficiens (strain JCM 10833 / BCRC 13528 / IAM 13628 / NBRC 14792 / USDA 110).